The following is a 121-amino-acid chain: Holin-like protein CidA 1 (121 aa).

Transmembrane regions (helical) follow at residues 7–24, 28–50, 62–81, and 91–113; these read SGQILLLFCFAWTGEWIA, HLPVPGSIIGIFLLLISLKFNLV, LLKELILFFIPSAVAVIRYR, and LILIIMISTLCVTLVTGLLTELL.

It belongs to the CidA/LrgA family. CidA subfamily.

It localises to the cell membrane. Increases the activity of extracellular murein hydrolases possibly by mediating their export via hole formation. Inhibited by the antiholin-like proteins LrgAB. In an unstressed cell, the LrgAB products probably inhibit the function of the CidA protein. When a cell is stressed by the addition of antibiotics or by other factors in the environment, CidA possibly oligomerizes within the bacterial cell membrane, creating lesions that disrupt the proton motive force, which in turn results in loss of cell viability. These lesions are also hypothesized to regulate the subsequent cell lysis by either allowing the murein hydrolases access to the cell wall substrate and/or regulating their activity by a possible change in the cell wall pH that results from loss of membrane potential. This is Holin-like protein CidA 1 (cidA1) from Bacillus cereus (strain ATCC 14579 / DSM 31 / CCUG 7414 / JCM 2152 / NBRC 15305 / NCIMB 9373 / NCTC 2599 / NRRL B-3711).